The chain runs to 380 residues: MAPNLRKSHPLLKMINNSLIDLPTPSNISAWWNFGSLLGICLATQILTGLLLAAHYTADTTLAFSSVAHTCRNVQHGWLIRNLHANGASFFFICIYLHIGRGLYYGSYLYKETWNTGVILLLTLMATAFVGYVLPWGQMSFWGATVITNLFSAVPYIGQTLVEWAWGGFSVDNPTLTRFFTLHFLLPFMIMGLTLIHLTFLHESGSNNPLGIVSNCDKIPFHPYFSLKDILGFMLMLLPLMTLALFSPNLLGDPENFTPANPLVTPPHIKPEWYFLFAYAVLRSIPNKLGGVLALAASVLILFLAPLLHKSKQRTMTFRPFSQLLFWTLTANVLILTWVGSQPVERPFIIIGQLASLTYFTILLILFPIIGALENKMLNY.

4 consecutive transmembrane segments (helical) span residues 34-54 (FGSLLGICLATQILTGLLLAA), 78-99 (WLIRNLHANGASFFFICIYLHI), 114-134 (WNTGVILLLTLMATAFVGYVL), and 179-199 (FFTLHFLLPFMIMGLTLIHLT). The heme b site is built by histidine 84 and histidine 98. Residues histidine 183 and histidine 197 each coordinate heme b. Residue histidine 202 participates in a ubiquinone binding. A run of 4 helical transmembrane segments spans residues 227-247 (LKDILGFMLMLLPLMTLALFS), 289-309 (LGGVLALAASVLILFLAPLLH), 321-341 (FSQLLFWTLTANVLILTWVGS), and 348-368 (FIIIGQLASLTYFTILLILFP).

It belongs to the cytochrome b family. The cytochrome bc1 complex contains 11 subunits: 3 respiratory subunits (MT-CYB, CYC1 and UQCRFS1), 2 core proteins (UQCRC1 and UQCRC2) and 6 low-molecular weight proteins (UQCRH/QCR6, UQCRB/QCR7, UQCRQ/QCR8, UQCR10/QCR9, UQCR11/QCR10 and a cleavage product of UQCRFS1). This cytochrome bc1 complex then forms a dimer. Heme b is required as a cofactor.

Its subcellular location is the mitochondrion inner membrane. Its function is as follows. Component of the ubiquinol-cytochrome c reductase complex (complex III or cytochrome b-c1 complex) that is part of the mitochondrial respiratory chain. The b-c1 complex mediates electron transfer from ubiquinol to cytochrome c. Contributes to the generation of a proton gradient across the mitochondrial membrane that is then used for ATP synthesis. The sequence is that of Cytochrome b (MT-CYB) from Bugeranus carunculatus (Wattled crane).